The primary structure comprises 208 residues: MKAIFITLEGPDGSGKTTVGTLLNQKMTEAGIDFIKTREPGGSPISEKVRNIVLGIGNEEMDPKTEVLLIAGARRQHVVETIRPALAVGKTVLCDRFMDSSLAYQGAGRDMDMEQVLQVNLYAIEDTLPDRTYYLDVPAEVGLARIAANKGREVNRLDKEDITYHEKVQAGYEKVINMFPERFMRVDATKTPEEITETILADILRQLA.

10–17 provides a ligand contact to ATP; sequence GPDGSGKT.

It belongs to the thymidylate kinase family.

The catalysed reaction is dTMP + ATP = dTDP + ADP. In terms of biological role, phosphorylation of dTMP to form dTDP in both de novo and salvage pathways of dTTP synthesis. In Listeria monocytogenes serotype 4a (strain HCC23), this protein is Thymidylate kinase.